The chain runs to 86 residues: Small ribosomal subunit protein uS17 (86 aa).

It belongs to the universal ribosomal protein uS17 family. In terms of assembly, part of the 30S ribosomal subunit.

Its function is as follows. One of the primary rRNA binding proteins, it binds specifically to the 5'-end of 16S ribosomal RNA. This Exiguobacterium sp. (strain ATCC BAA-1283 / AT1b) protein is Small ribosomal subunit protein uS17.